We begin with the raw amino-acid sequence, 670 residues long: Solute carrier organic anion transporter family member 1A6 (670 aa).

Residues 1–20 (MGEPEKRAGTHGIRCFAKIK) lie on the Cytoplasmic side of the membrane. The chain crosses the membrane as a helical span at residues 21-40 (VFLLALTWAYASKALSATYM). Over 41–59 (NSMLTQIERRFNISTSIVG) the chain is Extracellular. N-linked (GlcNAc...) asparagine glycosylation occurs at Asn52. The helical transmembrane segment at 60–80 (LINGSFEVGNLLLIIFVSYFG) threads the bilayer. The Cytoplasmic segment spans residues 81 to 86 (RKRHRP). The helical transmembrane segment at 87 to 111 (IMIGIGCAVMGLGCFIISLPHFLMG) threads the bilayer. Topologically, residues 112–155 (RYEYETTISPTSNLSSNSFLCMENRTQTLKPTQDPAECVKEMKS) are extracellular. N-linked (GlcNAc...) asparagine glycans are attached at residues Asn124 and Asn135. A helical transmembrane segment spans residues 156–184 (LMWIYVLVGNIIRGIGETPIMPLGISYIE). Residues 185–203 (DFAKSENSPFYIGILEVGK) lie on the Cytoplasmic side of the membrane. A helical membrane pass occupies residues 204–224 (ITGPIAAIWLGSFCATIYVDM). Topologically, residues 225-242 (GSVNTDDLTITPTDTRCV) are extracellular. Residues 243–267 (GAWWIGFLVCAGLNILISIPFFFFP) form a helical membrane-spanning segment. Residues 268–311 (KTFPKEGPEDMANETKNDEGDKHREKAKEEKRGITKDFFLFMKS) lie on the Cytoplasmic side of the membrane. The segment at 276–295 (EDMANETKNDEGDKHREKAK) is disordered. A helical transmembrane segment spans residues 312–333 (LSCNPIYMLCVLTSVLQVNGFV). Residues 334 to 353 (SIFTFKPKYLEHHYGKSSSE) lie on the Extracellular side of the membrane. A helical membrane pass occupies residues 354–377 (AIFLMGLYTLPSVCVGYLISGFIM). Topologically, residues 378-381 (KKFK) are cytoplasmic. The chain crosses the membrane as a helical span at residues 382-405 (ITLKKAAFISYCLGMSECLLSLCN). The Extracellular segment spans residues 406 to 513 (FMLTCDNVPI…PDCANKLQYF (108 aa)). A Kazal-like domain is found at 433–488 (NTVLADCNTRCSCLTKTWDPVCGDNGLAYITPCLAGCEKSVGSGINMVLQDCSCIQ). Intrachain disulfides connect Cys439-Cys469, Cys445-Cys465, and Cys454-Cys486. N-linked (GlcNAc...) asparagine glycosylation is present at Asn492. Residues 514 to 536 (LIITVFCSFFYSLSLIPGYMIFL) traverse the membrane as a helical segment. At 537–545 (RCMKSEEKS) the chain is on the cytoplasmic side. Residues 546–571 (LGIGLQAFCMRILGGILAPIYFGVLI) form a helical membrane-spanning segment. Residues 572 to 605 (DRTCLHWGTQKCGEPGACRTYEINSFRSIYLGLP) are Extracellular-facing. Residues 606–623 (AALRGSSYLPAFFILRLM) form a helical membrane-spanning segment. Residues 624–670 (RKFQFPGDINSPVTDHVEMMLTEKESEHTDVHRSPQVENDGELKTKL) lie on the Cytoplasmic side of the membrane. Residue Ser634 is modified to Phosphoserine. The interval 647–670 (KESEHTDVHRSPQVENDGELKTKL) is disordered.

This sequence belongs to the organo anion transporter (TC 2.A.60) family.

It is found in the cell membrane. Its function is as follows. May mediate the Na(+)-independent transport of organic anions. The sequence is that of Solute carrier organic anion transporter family member 1A6 (Slco1a6) from Rattus norvegicus (Rat).